Here is a 298-residue protein sequence, read N- to C-terminus: GTPase Era (298 aa).

Residues 8–176 (RCGRIAVIGR…VSDLLALLPE (169 aa)) form the Era-type G domain. The G1 stretch occupies residues 16–23 (GRPNVGKS). Position 16–23 (16–23 (GRPNVGKS)) interacts with GTP. The G2 stretch occupies residues 42 to 46 (QTTRH). Positions 63–66 (DTPG) are G3. GTP is bound by residues 63 to 67 (DTPGL) and 125 to 128 (NKID). Residues 125-128 (NKID) are G4. Residues 155-157 (VSA) are G5. The region spanning 199–283 (VREQVMRQLG…FLETWVRVRK (85 aa)) is the KH type-2 domain.

The protein belongs to the TRAFAC class TrmE-Era-EngA-EngB-Septin-like GTPase superfamily. Era GTPase family. In terms of assembly, monomer.

It localises to the cytoplasm. The protein localises to the cell inner membrane. In terms of biological role, an essential GTPase that binds both GDP and GTP, with rapid nucleotide exchange. Plays a role in 16S rRNA processing and 30S ribosomal subunit biogenesis and possibly also in cell cycle regulation and energy metabolism. The chain is GTPase Era from Xylella fastidiosa (strain M12).